Here is a 473-residue protein sequence, read N- to C-terminus: UDP-glycosyltransferase 91D2 (473 aa).

H26 functions as the Proton acceptor in the catalytic mechanism. Position 26 (H26) interacts with an anthocyanidin. D121 (charge relay) is an active-site residue. The UDP-alpha-D-glucose site is built by A344, Q346, H361, S366, and E369. G384 is an an anthocyanidin binding site. Residues D385 and Q386 each coordinate UDP-alpha-D-glucose.

It belongs to the UDP-glycosyltransferase family.

It catalyses the reaction steviolmonoside + UDP-alpha-D-glucose = steviolbioside + UDP + H(+). It carries out the reaction rubusoside + UDP-alpha-D-glucose = stevioside + UDP + H(+). The catalysed reaction is stevioside + UDP-alpha-D-glucose = rebaudioside E + UDP + H(+). The enzyme catalyses rebaudioside A + UDP-alpha-D-glucose = rebaudioside D + UDP + H(+). Its function is as follows. Involved in the biosynthesis of steviol glycosides in leaves. Converts the mono-glycoside steviolmonoside to the bi-glycoside steviolbioside. Converts the bi-glycoside rubusoside to the tri-glycoside stevioside. Converts the tri-glycoside stevioside to the tetra-glycoside rebaudioside E. Converts the tetra-glycoside rebaudioside A to the penta-glycoside rebaudioside E. The polypeptide is UDP-glycosyltransferase 91D2 (Stevia rebaudiana (Stevia)).